Reading from the N-terminus, the 161-residue chain is Crossover junction endodeoxyribonuclease RuvC (161 aa).

Residues Asp7, Glu67, and Asp140 contribute to the active site. Asp7, Glu67, and Asp140 together coordinate Mg(2+).

It belongs to the RuvC family. As to quaternary structure, homodimer which binds Holliday junction (HJ) DNA. The HJ becomes 2-fold symmetrical on binding to RuvC with unstacked arms; it has a different conformation from HJ DNA in complex with RuvA. In the full resolvosome a probable DNA-RuvA(4)-RuvB(12)-RuvC(2) complex forms which resolves the HJ. Requires Mg(2+) as cofactor.

Its subcellular location is the cytoplasm. The catalysed reaction is Endonucleolytic cleavage at a junction such as a reciprocal single-stranded crossover between two homologous DNA duplexes (Holliday junction).. Functionally, the RuvA-RuvB-RuvC complex processes Holliday junction (HJ) DNA during genetic recombination and DNA repair. Endonuclease that resolves HJ intermediates. Cleaves cruciform DNA by making single-stranded nicks across the HJ at symmetrical positions within the homologous arms, yielding a 5'-phosphate and a 3'-hydroxyl group; requires a central core of homology in the junction. The consensus cleavage sequence is 5'-(A/T)TT(C/G)-3'. Cleavage occurs on the 3'-side of the TT dinucleotide at the point of strand exchange. HJ branch migration catalyzed by RuvA-RuvB allows RuvC to scan DNA until it finds its consensus sequence, where it cleaves and resolves the cruciform DNA. The chain is Crossover junction endodeoxyribonuclease RuvC from Natranaerobius thermophilus (strain ATCC BAA-1301 / DSM 18059 / JW/NM-WN-LF).